The primary structure comprises 508 residues: Photosystem II CP47 reaction center protein (508 aa).

Transmembrane regions (helical) follow at residues serine 21 to serine 36, isoleucine 101 to tryptophan 115, glycine 140 to phenylalanine 156, isoleucine 203 to serine 218, valine 237 to valine 252, and serine 457 to arginine 472.

Belongs to the PsbB/PsbC family. PsbB subfamily. In terms of assembly, PSII is composed of 1 copy each of membrane proteins PsbA, PsbB, PsbC, PsbD, PsbE, PsbF, PsbH, PsbI, PsbJ, PsbK, PsbL, PsbM, PsbT, PsbX, PsbY, PsbZ, Psb30/Ycf12, at least 3 peripheral proteins of the oxygen-evolving complex and a large number of cofactors. It forms dimeric complexes. Binds multiple chlorophylls. PSII binds additional chlorophylls, carotenoids and specific lipids. serves as cofactor.

It is found in the plastid. It localises to the chloroplast thylakoid membrane. Functionally, one of the components of the core complex of photosystem II (PSII). It binds chlorophyll and helps catalyze the primary light-induced photochemical processes of PSII. PSII is a light-driven water:plastoquinone oxidoreductase, using light energy to abstract electrons from H(2)O, generating O(2) and a proton gradient subsequently used for ATP formation. The chain is Photosystem II CP47 reaction center protein from Capsella bursa-pastoris (Shepherd's purse).